Reading from the N-terminus, the 291-residue chain is Phosphatidylcholine-sterol acyltransferase (291 aa).

An N-linked (GlcNAc...) asparagine glycan is attached at Asn28. Residue Ser125 is the Nucleophile of the active site. Residue Asn179 is glycosylated (N-linked (GlcNAc...) asparagine). Cys220 and Cys263 are oxidised to a cystine. Asp252 acts as the Charge relay system in catalysis. N-linked (GlcNAc...) asparagine glycosylation is present at Asn280.

Belongs to the AB hydrolase superfamily. Lipase family.

The protein resides in the secreted. It carries out the reaction a sterol + a 1,2-diacyl-sn-glycero-3-phosphocholine = a sterol ester + a 1-acyl-sn-glycero-3-phosphocholine. Its activity is regulated as follows. APOA1 is the most potent activator in plasma. Also activated by APOE, APOC1 and APOA4. Central enzyme in the extracellular metabolism of plasma lipoproteins. Synthesized mainly in the liver and secreted into plasma where it converts cholesterol and phosphatidylcholines (lecithins) to cholesteryl esters and lysophosphatidylcholines on the surface of high and low density lipoproteins (HDLs and LDLs). The cholesterol ester is then transported back to the liver. Has a preference for plasma 16:0-18:2 or 18:O-18:2 phosphatidylcholines. Also produced in the brain by primary astrocytes, and esterifies free cholesterol on nascent APOE-containing lipoproteins secreted from glia and influences cerebral spinal fluid (CSF) APOE- and APOA1 levels. Together with APOE and the cholesterol transporter ABCA1, plays a key role in the maturation of glial-derived, nascent lipoproteins. Required for remodeling high-density lipoprotein particles into their spherical forms. The protein is Phosphatidylcholine-sterol acyltransferase (LCAT) of Myodes glareolus (Bank vole).